The following is a 115-amino-acid chain: DNA-binding protein TV0008 (115 aa).

Residues 18–37 (LQRQAMQRQMAEEEEKQREI) form a disordered region.

The protein belongs to the PDCD5 family.

This Thermoplasma volcanium (strain ATCC 51530 / DSM 4299 / JCM 9571 / NBRC 15438 / GSS1) protein is DNA-binding protein TV0008.